Reading from the N-terminus, the 205-residue chain is uncharacterized protein (205 aa).

One can recognise a GST N-terminal domain in the interval 1-82; that stretch reads MIKVYGVPGW…MVLDRRPDLA (82 aa). Glutathione-binding positions include Val53 and 66 to 67; that span reads ET. A GST C-terminal domain is found at 86-205; the sequence is GRAERQLFQR…QEVLKRNEII (120 aa).

It belongs to the GST superfamily. Beta family.

This is an uncharacterized protein from Escherichia coli (strain K12).